The chain runs to 356 residues: GDP-mannose:di-myo-inositol-1,3'-phosphate beta-1,2-mannosyltransferase (356 aa).

Belongs to the MDIP synthase family. Requires Mg(2+) as cofactor.

It carries out the reaction bis(myo-inositol) 1,3'-phosphate + GDP-alpha-D-mannose = 2-O-(beta-D-mannosyl)-bis(myo-inositol) 1,3'-phosphate + GDP + H(+). It catalyses the reaction 2-O-(beta-D-mannosyl)-bis(myo-inositol) 1,3'-phosphate + GDP-alpha-D-mannose = 2-O-(beta-D-mannosyl-(1-&gt;2)-beta-D-mannosyl)-bis(myo-inositol) 1,3'-phosphate + GDP + H(+). The enzyme catalyses bis(myo-inositol) 1,3'-phosphate + 2 GDP-alpha-D-mannose = 2-O-(beta-D-mannosyl-(1-&gt;2)-beta-D-mannosyl)-bis(myo-inositol) 1,3'-phosphate + 2 GDP + 2 H(+). Its function is as follows. Catalyzes the transfer of the mannosyl group from GDP-mannose to di-myo-inositol-1,3'-phosphate (DIP), producing mannosyl-di-myo-inositol phosphate (MDIP). Can also use MDIP as an acceptor of a second mannose residue, yielding di-mannosyl-di-myo-inositol phosphate (MMDIP). Minor amounts of the tri-mannosylated form are also formed. The chain is GDP-mannose:di-myo-inositol-1,3'-phosphate beta-1,2-mannosyltransferase from Thermotoga maritima (strain ATCC 43589 / DSM 3109 / JCM 10099 / NBRC 100826 / MSB8).